The sequence spans 566 residues: MSLNSEEDEAELVQLQPRYNGEDTSATTNRELNGWYAYPIAAEVFAVVAVGAFLPVILEQLARENGYFFSDSTKSCVDHGGSRRMRAEDGLKGSEQCMIKILNSTISTSSFAMYTFSAAVIVQAVTLVCFSSFADHGPYRKKMLMAFAYTGSVASALFIFISPTVYFLAPILVIVGVTSLGCSFVLLNAFLPLLVANHANNTGAKFATADSSSDFELEALNPNTQCGQSHARSAHMSSRGVGYGYMAAVFVQVISILILWLFSKTAIQKRHPSLPIRVILLLVGMWWAALTTPTLLWLRPRPGPPLPSQEAKTLSAPTSRFRTFLFYTRFSLRSFWRTLLRAISLRQTLMFLISWFLLSDAVATISGTAVLFARTELHMGTIAIALLSITSIGSGIIGAFAWPRVQKRFSLQPKTILLCCVAGMEMIPLYGLLGFIPLFKKLGFIGLQQPWEIYPVAVLHGIVMGGVSSYARSVYAPLIPEGSEAAFFALYAVTDKGSSAFGPALVGWLVDHAGSIRPAFIFLAVLVVLPAPLLWMLDVEKGREDAKAMADGEGRGRGTYERVREE.

The chain crosses the membrane as a helical span at residues 38–58 (YPIAAEVFAVVAVGAFLPVIL). An N-linked (GlcNAc...) asparagine glycan is attached at Asn103. Transmembrane regions (helical) follow at residues 110 to 130 (SFAMYTFSAAVIVQAVTLVCF), 146 to 168 (AFAYTGSVASALFIFISPTVYFL), and 179 to 199 (SLGCSFVLLNAFLPLLVANHA). Asn200 is a glycosylation site (N-linked (GlcNAc...) asparagine). 8 helical membrane passes run 242–262 (GYGYMAAVFVQVISILILWLF), 278–298 (VILLLVGMWWAALTTPTLLWL), 351–371 (FLISWFLLSDAVATISGTAVL), 382–402 (IAIALLSITSIGSGIIGAFAW), 416–436 (ILLCCVAGMEMIPLYGLLGFI), 451–471 (WEIYPVAVLHGIVMGGVSSYA), 488–510 (FALYAVTDKGSSAFGPALVGWLV), and 519–539 (AFIFLAVLVVLPAPLLWMLDV). The interval 547–566 (KAMADGEGRGRGTYERVREE) is disordered.

Belongs to the ATG22 family.

Its subcellular location is the vacuole membrane. Its function is as follows. Vacuolar effluxer which mediate the efflux of amino acids resulting from autophagic degradation. The release of autophagic amino acids allows the maintenance of protein synthesis and viability during nitrogen starvation. The chain is Autophagy-related protein 22-1 (ATG22-1) from Phaeosphaeria nodorum (strain SN15 / ATCC MYA-4574 / FGSC 10173) (Glume blotch fungus).